Here is a 65-residue protein sequence, read N- to C-terminus: Weak toxin CM-13b (65 aa).

5 disulfide bridges follow: Cys-3–Cys-24, Cys-6–Cys-11, Cys-17–Cys-42, Cys-46–Cys-57, and Cys-58–Cys-63.

Belongs to the three-finger toxin family. Ancestral subfamily. Orphan group II sub-subfamily. As to expression, expressed by the venom gland.

The protein localises to the secreted. Binds with low affinity to muscular (alpha-1-beta-1-delta-epsilon/CHRNA1-CHRNB1-CHRND-CHRNE) and very low affinity to neuronal (alpha-7/CHRNA7) nicotinic acetylcholine receptor (nAChR). The chain is Weak toxin CM-13b from Naja annulifera (Banded Egyptian cobra).